The chain runs to 306 residues: Pantothenate kinase (306 aa).

ATP is bound at residue 91 to 98; it reads GSVAVGKS.

The protein belongs to the prokaryotic pantothenate kinase family.

It is found in the cytoplasm. It catalyses the reaction (R)-pantothenate + ATP = (R)-4'-phosphopantothenate + ADP + H(+). It participates in cofactor biosynthesis; coenzyme A biosynthesis; CoA from (R)-pantothenate: step 1/5. In Streptococcus gordonii (strain Challis / ATCC 35105 / BCRC 15272 / CH1 / DL1 / V288), this protein is Pantothenate kinase.